A 346-amino-acid polypeptide reads, in one-letter code: tRNA N6-adenosine threonylcarbamoyltransferase (346 aa).

Fe cation contacts are provided by His117 and His121. Residues 139–143, Asp172, Gly185, Asp189, and Asn278 each bind substrate; that span reads VVSGG. Residue Asp307 participates in Fe cation binding.

The protein belongs to the KAE1 / TsaD family. In terms of assembly, may form a heterodimer with TsaB. Fe(2+) serves as cofactor.

It localises to the cytoplasm. It catalyses the reaction L-threonylcarbamoyladenylate + adenosine(37) in tRNA = N(6)-L-threonylcarbamoyladenosine(37) in tRNA + AMP + H(+). Required for the formation of a threonylcarbamoyl group on adenosine at position 37 (t(6)A37) in tRNAs that read codons beginning with adenine. Is involved in the transfer of the threonylcarbamoyl moiety of threonylcarbamoyl-AMP (TC-AMP) to the N6 group of A37, together with TsaE and TsaB; this reaction does not require ATP in vitro. TsaD likely plays a direct catalytic role in this reaction. The protein is tRNA N6-adenosine threonylcarbamoyltransferase of Bacillus subtilis (strain 168).